The following is a 311-amino-acid chain: Glycine--tRNA ligase alpha subunit (311 aa).

Belongs to the class-II aminoacyl-tRNA synthetase family. As to quaternary structure, tetramer of two alpha and two beta subunits.

It localises to the cytoplasm. It carries out the reaction tRNA(Gly) + glycine + ATP = glycyl-tRNA(Gly) + AMP + diphosphate. The protein is Glycine--tRNA ligase alpha subunit of Brucella anthropi (strain ATCC 49188 / DSM 6882 / CCUG 24695 / JCM 21032 / LMG 3331 / NBRC 15819 / NCTC 12168 / Alc 37) (Ochrobactrum anthropi).